The following is a 467-amino-acid chain: MRLLILLLLPLVAIAQDDYCFSKDTSRLQTRQFSSKTAYQIVKGTDIDKQYLVPGCQPQKMWIFHRHGTRLPKKSMINKASRVAELRDLIINNYQVARTKPETDALCQTDLIAIKLWKWNSSITPDMEEYLTAQGYEDLRGTAKLYQRYYPTVLTANYNDTYYQFRHTDTQRTTESFKAFAEGLFGSQNAAHPVEIPKQDLLLRPYDYCSSFKNVNYKDEGSEYYKFHQSKLYNDTLADISTRLGFLYTLEEADIKLMYDMCRYEQAWNVDRNSVWCGAFLPEQITVFEYLEDLKYYYGSGYGFPENAHLNCRLVQDLLTHLSNPVSPHVVAHFGHSTGLLTLLTALGIQKDDIKLRADNYDSLTSRRWKSSLIDPFAANFVAVKYDCPADLDREKVVFFLNQQAVQLDWCSVGLCKWSDVLEKYKTIADADCGEYYCRTGGAPSLGSGVGGLLATTLAAMLVYLMH.

An N-terminal signal peptide occupies residues 1–15 (MRLLILLLLPLVAIA). The active site involves H67. N120, N159, and N234 each carry an N-linked (GlcNAc...) asparagine glycan. G441 carries the GPI-anchor amidated glycine lipid modification. Residues 442–467 (GAPSLGSGVGGLLATTLAAMLVYLMH) constitute a propeptide, removed in mature form.

The protein belongs to the histidine acid phosphatase family. MINPP1 subfamily. In terms of processing, N-glycosylated.

It localises to the cell membrane. Its subcellular location is the apical cell membrane. The protein resides in the basolateral cell membrane. It is found in the cell projection. The protein localises to the filopodium. It localises to the cell junction. It catalyses the reaction (2R)-2,3-bisphosphoglycerate + H2O = (2R)-2-phosphoglycerate + phosphate. The catalysed reaction is 1D-myo-inositol hexakisphosphate + H2O = 1D-myo-inositol 1,2,4,5,6-pentakisphosphate + phosphate. It carries out the reaction 1D-myo-inositol 1,2,4,5,6-pentakisphosphate + H2O = 1D-myo-inositol 1,2,5,6-tetrakisphosphate + phosphate. The enzyme catalyses 1D-myo-inositol 1,2,5,6-tetrakisphosphate + H2O = 1D-myo-inositol 1,2,6-trisphosphate + phosphate. Probable multiple inositol polyphosphate phosphatase that hydrolyzes 1D-myo-inositol 1,3,4,5,6-pentakisphosphate (InsP5[2OH]) and 1D-myo-inositol hexakisphosphate (InsP6) to a range of less phosphorylated inositol phosphates. This regulates the availability of these various small molecule second messengers and metal chelators which control many aspects of cell physiology. May have a dual substrate specificity, and function as a 2,3-bisphosphoglycerate 3-phosphatase hydrolyzing 2,3-bisphosphoglycerate to 2-phosphoglycerate. 2,3-bisphosphoglycerate (BPG) is formed as part of the Rapoport-Luebering glycolytic bypass. Has a role in embryonic tracheal development where it localizes to the leading edge of actively migrating branches. In these leading cells, enhances formation and/or maintenance of filopodia which may drive branch migration and elongation by cell-cell intercalation. The function in tracheal morphogenesis is dependent on its inositol polyphosphate phosphatase activity. The polypeptide is Multiple inositol polyphosphate phosphatase 1 (Drosophila melanogaster (Fruit fly)).